A 253-amino-acid polypeptide reads, in one-letter code: Phycobilisome rod-core linker polypeptide CpcG4 (253 aa).

Residues 11–191 (SSQNHRVTSF…DFQEKAGTVQ (181 aa)) enclose the PBS-linker domain.

This sequence belongs to the phycobilisome linker protein family. Part of the phycobilisome, a hemidiscoidal structure that is composed of two distinct substructures: a core complex and a number of rods radiating from the core.

Its subcellular location is the cellular thylakoid membrane. In terms of biological role, rod-core linker protein required for attachment of phycocyanin to allophycocyanin in cores of phycobilisomes. Its function is as follows. Linker polypeptides determine the state of aggregation and the location of the disk-shaped phycobiliprotein units within the phycobilisome and modulate their spectroscopic properties in order to mediate a directed and optimal energy transfer. This is Phycobilisome rod-core linker polypeptide CpcG4 from Nostoc sp. (strain PCC 7120 / SAG 25.82 / UTEX 2576).